A 626-amino-acid chain; its full sequence is MALLSVAPLASKSRLHKTLITSAHHLKPSPTTIPTLPVCTRRKTFTASITMCLTAPVSDDGVKRRIGNHHSNLWDHDFILSLSTPYEAPSYRERAARLISEVKEMFTEIEDGLSITPLNDLLSRLSMVDSIERLGVDRHFKMEIKSALDYVHRYWSEKGIGCGRESGVTDLNSTALGLRTLRLHGYPVSSSVLEQFKDEKGQFATSSIQTDPGEIRTIFNLFRASLVAFPNEKVMEDAQIFSTIYLKEYLEKIPLSSLSRQIEYVMEYGWHTNLPRLEARHYMDVFGDNEMPWMSYVNTEKLLELAKLEFNIFHSIQQRELKHISRWWKDSGFSQMNFVRHRHVEYYTLASCFAIDPEHSAFRVSFAKMCHLGTVLDDIYDTFGTMEELQLFTAAVKRWDPSATDSLPEYMKRVYTVLYETVNEMAQVAKKSQGRDTINYARHAWEAYLDSYMKEAEWISTGCLPTFEEYYENGKISFGYRICMLQPILSMDIPFPHHILQEIDYPSRFSSLAAGILRLKGDTRCYQADSARGEEASCISCYMKENPGLTEEDVVNHIHGMVDDLIKELNWELLKPDCNVPISSKKHAFDICRAFHHGYKYRDGYSVATNEIKDLVMITVLEPVPL.

The transit peptide at 1–38 (MALLSVAPLASKSRLHKTLITSAHHLKPSPTTIPTLPV) directs the protein to the chloroplast. The Mg(2+) site is built by Asp377, Asp381, and Asp529. A DDXXD motif motif is present at residues 377–381 (DDIYD).

Belongs to the terpene synthase family. Tpsd subfamily. Requires Mg(2+) as cofactor. The cofactor is Mn(2+).

Its subcellular location is the plastid. It is found in the chloroplast. The catalysed reaction is (2E)-geranyl diphosphate + H2O = (S)-alpha-terpineol + diphosphate. The enzyme catalyses (2E)-geranyl diphosphate + H2O = (R)-alpha-terpineol + diphosphate. It catalyses the reaction (2E)-geranyl diphosphate + H2O = (2E)-geraniol + diphosphate. It carries out the reaction (2E)-geranyl diphosphate = terpinolene + diphosphate. The catalysed reaction is (2E)-geranyl diphosphate = (4S)-limonene + diphosphate. It participates in terpene metabolism; oleoresin biosynthesis. Its pathway is secondary metabolite biosynthesis; terpenoid biosynthesis. Functionally, monoterpene synthase (TPS) involved in the biosynthesis of monoterpene natural products included in conifer oleoresin secretions and volatile emissions; these compounds contribute to biotic and abiotic stress defense against herbivores and pathogens. Catalyzes the conversion of (2E)-geranyl diphosphate (GPP) to (-)-alpha-terpineol, (+)-alpha-terpineol and terpin-4-ol, and, to a lower extent, to geraniol, terpinolene and (-)-limonene. The protein is Alpha terpineol synthase, chloroplastic of Pinus banksiana (Jack pine).